The sequence spans 164 residues: R-phycoerythrin alpha chain (164 aa).

(2R,3E)-phycoerythrobilin contacts are provided by Cys-82 and Cys-139.

Belongs to the phycobiliprotein family. As to quaternary structure, heterodimer of an alpha and a beta chain. Contains two covalently linked bilin chromophores.

The protein localises to the plastid. Its subcellular location is the chloroplast thylakoid membrane. Light-harvesting photosynthetic bile pigment-protein from the phycobiliprotein complex. The chain is R-phycoerythrin alpha chain (cpeA) from Porphyra purpurea (Red seaweed).